A 101-amino-acid polypeptide reads, in one-letter code: Large ribosomal subunit protein uL23 (101 aa).

It belongs to the universal ribosomal protein uL23 family. Part of the 50S ribosomal subunit. Contacts protein L29, and trigger factor when it is bound to the ribosome.

Its function is as follows. One of the early assembly proteins it binds 23S rRNA. One of the proteins that surrounds the polypeptide exit tunnel on the outside of the ribosome. Forms the main docking site for trigger factor binding to the ribosome. The protein is Large ribosomal subunit protein uL23 of Azoarcus sp. (strain BH72).